Consider the following 447-residue polypeptide: MNHSLYLVAGLGKTGLSIARYLKRNNKSFVVFDTRKEAPGLAEFQNEFPDVPIYLQQTPDEVISQVTDVITSPGLALDTPVLERARQAGASIYGDIECLAREISAPVIAITGTNGKSTVTTLVGEMAKAAGFRVAVAGNIGTPVLDMLDDEHHYDLWVLELSSFQLDLTYSLSPVVATILNVTPDHLDRHHTMEAYTQAKQRIYRGAKAVLFNREDVYTVPHQSCQTDIKCISFGKDAPSMGNWGLIEQENTTYLAKGMERLLPVESILIKGVHNWMNALAACALAEAAGISMQHILNVLKTFPGLPHRCQWVREVDGVGWINDSKGTNIGATISAINGIGGSMQGKIVLIAGGQGKGADFQELAQPVSEFVRSIVLIGEDADKIESALAKVVPVVRASSLEGAVTIAKTCAKPGDVVLLSPACASLDMFRDFNHRGDVFTSSVRGL.

Position 112-118 (112-118 (GTNGKST)) interacts with ATP.

This sequence belongs to the MurCDEF family.

It localises to the cytoplasm. It catalyses the reaction UDP-N-acetyl-alpha-D-muramoyl-L-alanine + D-glutamate + ATP = UDP-N-acetyl-alpha-D-muramoyl-L-alanyl-D-glutamate + ADP + phosphate + H(+). It functions in the pathway cell wall biogenesis; peptidoglycan biosynthesis. In terms of biological role, cell wall formation. Catalyzes the addition of glutamate to the nucleotide precursor UDP-N-acetylmuramoyl-L-alanine (UMA). The sequence is that of UDP-N-acetylmuramoylalanine--D-glutamate ligase from Legionella pneumophila (strain Paris).